The following is a 171-amino-acid chain: Der GTPase-activating protein YihI (171 aa).

2 disordered regions span residues 1–99 and 145–171; these read MKKP…QAEL and LSYDDDEEDDEEDEKQEDMMRLLRGGN. The span at 20–30 shows a compositional bias: basic and acidic residues; it reads TREELNQEARD. A compositionally biased stretch (basic residues) spans 31–40; the sequence is RKRLKKHRGH. Over residues 147–160 the composition is skewed to acidic residues; sequence YDDDEEDDEEDEKQ.

This sequence belongs to the YihI family. Interacts with Der.

Its function is as follows. A GTPase-activating protein (GAP) that modifies Der/EngA GTPase function. May play a role in ribosome biogenesis. This chain is Der GTPase-activating protein YihI, found in Salmonella agona (strain SL483).